A 411-amino-acid polypeptide reads, in one-letter code: Na(+)-translocating NADH-quinone reductase subunit F (411 aa).

Residues 5 to 25 (VILALGIAAFTVIVLVLVAII) traverse the membrane as a helical segment. A 2Fe-2S ferredoxin-type domain is found at 36–130 (GDITIDINDD…NMEVELPEEI (95 aa)). Residues C73, C79, C82, and C114 each contribute to the [2Fe-2S] cluster site. Residues 133-273 (VKKWECTVIS…SGPFGEFFAK (141 aa)) enclose the FAD-binding FR-type domain.

Belongs to the NqrF family. Composed of six subunits; NqrA, NqrB, NqrC, NqrD, NqrE and NqrF. The cofactor is [2Fe-2S] cluster. It depends on FAD as a cofactor.

The protein resides in the cell inner membrane. It carries out the reaction a ubiquinone + n Na(+)(in) + NADH + H(+) = a ubiquinol + n Na(+)(out) + NAD(+). NQR complex catalyzes the reduction of ubiquinone-1 to ubiquinol by two successive reactions, coupled with the transport of Na(+) ions from the cytoplasm to the periplasm. The first step is catalyzed by NqrF, which accepts electrons from NADH and reduces ubiquinone-1 to ubisemiquinone by a one-electron transfer pathway. The polypeptide is Na(+)-translocating NADH-quinone reductase subunit F (Haemophilus influenzae (strain PittGG)).